A 142-amino-acid chain; its full sequence is Transcriptional regulator MraZ (142 aa).

SpoVT-AbrB domains lie at 5–47 (EYQH…TINE) and 76–119 (ACIV…SREK).

The protein belongs to the MraZ family. Forms oligomers.

The protein localises to the cytoplasm. The protein resides in the nucleoid. This Clostridium botulinum (strain Alaska E43 / Type E3) protein is Transcriptional regulator MraZ.